A 270-amino-acid polypeptide reads, in one-letter code: Fluoride-specific ion channel FluC 2 (270 aa).

Transmembrane regions (helical) follow at residues 4–24 (IIILVVIGGAFGAMTREFIML), 35–55 (LDILVANVVACFLLGTVTALY), 67–87 (IIGTGMMGGVSTFSSFAYGSV), and 96–116 (AFLIAAAYVTVSVVAGYVAVL). Na(+) is bound by residues Gly74 and Ser77.

The protein belongs to the fluoride channel Fluc/FEX (TC 1.A.43) family.

The protein localises to the cell inner membrane. The catalysed reaction is fluoride(in) = fluoride(out). Na(+) is not transported, but it plays an essential structural role and its presence is essential for fluoride channel function. Its function is as follows. Fluoride-specific ion channel. Important for reducing fluoride concentration in the cell, thus reducing its toxicity. The protein is Fluoride-specific ion channel FluC 2 of Brucella melitensis biotype 1 (strain ATCC 23456 / CCUG 17765 / NCTC 10094 / 16M).